The following is a 67-amino-acid chain: uncharacterized protein (67 aa).

A helical transmembrane segment spans residues I19–W39.

Its subcellular location is the membrane. This is an uncharacterized protein from Dictyostelium discoideum (Social amoeba).